A 528-amino-acid chain; its full sequence is uncharacterized protein (528 aa).

2 stretches are compositionally biased toward basic residues: residues 1-16 (MGKASKATKKFTKNHL) and 25-43 (QLARSKKVYGTKNRNSHTK). Residues 1 to 59 (MGKASKATKKFTKNHLKNTIERRKQLARSKKVYGTKNRNSHTKNKLESGTNDNNKNKED) are disordered.

Belongs to the NOC2 family.

The protein localises to the nucleus. It is found in the nucleolus. This is an uncharacterized protein from Schizosaccharomyces pombe (strain 972 / ATCC 24843) (Fission yeast).